The primary structure comprises 40 residues: Photosystem II reaction center protein J (40 aa).

The chain crosses the membrane as a helical span at residues isoleucine 8–phenylalanine 28.

It belongs to the PsbJ family. In terms of assembly, PSII is composed of 1 copy each of membrane proteins PsbA, PsbB, PsbC, PsbD, PsbE, PsbF, PsbH, PsbI, PsbJ, PsbK, PsbL, PsbM, PsbT, PsbX, PsbY, PsbZ, Psb30/Ycf12, at least 3 peripheral proteins of the oxygen-evolving complex and a large number of cofactors. It forms dimeric complexes.

It localises to the plastid. The protein localises to the chloroplast thylakoid membrane. One of the components of the core complex of photosystem II (PSII). PSII is a light-driven water:plastoquinone oxidoreductase that uses light energy to abstract electrons from H(2)O, generating O(2) and a proton gradient subsequently used for ATP formation. It consists of a core antenna complex that captures photons, and an electron transfer chain that converts photonic excitation into a charge separation. This chain is Photosystem II reaction center protein J, found in Helianthus annuus (Common sunflower).